A 216-amino-acid polypeptide reads, in one-letter code: Uracil phosphoribosyltransferase (216 aa).

5-phospho-alpha-D-ribose 1-diphosphate contacts are provided by residues Arg85, Arg110, and 136-144 (DPMLATGNS). Uracil contacts are provided by residues Ile201 and 206-208 (GDA). Asp207 contributes to the 5-phospho-alpha-D-ribose 1-diphosphate binding site.

It belongs to the UPRTase family. Mg(2+) serves as cofactor.

It catalyses the reaction UMP + diphosphate = 5-phospho-alpha-D-ribose 1-diphosphate + uracil. It participates in pyrimidine metabolism; UMP biosynthesis via salvage pathway; UMP from uracil: step 1/1. Allosterically activated by GTP. Its function is as follows. Catalyzes the conversion of uracil and 5-phospho-alpha-D-ribose 1-diphosphate (PRPP) to UMP and diphosphate. The polypeptide is Uracil phosphoribosyltransferase (Rhodospirillum centenum (strain ATCC 51521 / SW)).